A 487-amino-acid chain; its full sequence is Serine/threonine-protein kinase 4 (487 aa).

N-acetylmethionine is present on Met1. Thr3 carries the phosphothreonine modification. Residues 30–281 (FDVLEKLGEG…ATQLLQHPFV (252 aa)) enclose the Protein kinase domain. ATP contacts are provided by residues 36–44 (LGEGSYGSV) and Lys59. Asp149 (proton acceptor) is an active-site residue. Thr183 is modified (phosphothreonine; by autocatalysis). Ser265 is modified (phosphoserine). Residues 290–310 (LRDLINEAMDVKLKRQESQQR) are a coiled coil. Over residues 303–312 (KRQESQQREV) the composition is skewed to basic and acidic residues. The segment at 303–332 (KRQESQQREVDQDDEENSEEDEMDSGTMVR) is disordered. Over residues 313–326 (DQDDEENSEEDEMD) the composition is skewed to acidic residues. Ser320 carries the phosphoserine modification. A phosphothreonine mark is found at Thr340 and Thr367. Thr387 carries the post-translational modification Phosphothreonine; by PKB/AKT1. Ser410 and Ser414 each carry phosphoserine. Tyr433 is modified (phosphotyrosine). Residues 433-480 (YEFLKSWTVEDLQKRLLALDPMMEQEIEEIRQKYQSKRQPILDAIEAK) form the SARAH domain.

The protein belongs to the protein kinase superfamily. STE Ser/Thr protein kinase family. STE20 subfamily. In terms of assembly, homodimer; mediated via the coiled-coil region. Interacts with NORE1, which inhibits autoactivation. Interacts with and stabilizes SAV1. Interacts with RASSF1. Interacts with FOXO3. Interacts with RASSF2 (via SARAH domain). Interacts with AR, PKB/AKT1, TNNI3 and SIRT1. Interacts with DLG5 (via PDZ domain 3). Interacts with MARK3 and SCRIB in the presence of DLG5. Mg(2+) is required as a cofactor. Post-translationally, autophosphorylated on serine and threonine residues. Phosphorylation at Thr-387 by PKB/AKT1, leads to inhibition of its: kinase activity, nuclear translocation and autophosphorylation at Thr-183. It also diminishes its cleavage by caspases and its ability to phosphorylate FOXO3. In terms of processing, proteolytically cleaved by caspase-3 during apoptosis at Asp-326 and Asp-349 resulting in a 37 kDa or a 39 kDa subunit respectively. The 39 kDa subunit is further cleaved into the 37 kDa form. Proteolytic cleavage results in kinase activation and nuclear translocation of the truncated form (MST1/N). It is less likely that cleavage at Asp-349 is a prerequisite for activation as this site is not conserved in the murine ortholog.

The protein localises to the cytoplasm. It localises to the nucleus. It catalyses the reaction L-seryl-[protein] + ATP = O-phospho-L-seryl-[protein] + ADP + H(+). The catalysed reaction is L-threonyl-[protein] + ATP = O-phospho-L-threonyl-[protein] + ADP + H(+). Inhibited by the C-terminal non-catalytic region. Activated by caspase-cleavage. Full activation also requires homodimerization and autophosphorylation of Thr-183. Activated by RASSF1 which acts by preventing its dephosphorylation. Stress-activated, pro-apoptotic kinase which, following caspase-cleavage, enters the nucleus and induces chromatin condensation followed by internucleosomal DNA fragmentation. Key component of the Hippo signaling pathway which plays a pivotal role in organ size control and tumor suppression by restricting proliferation and promoting apoptosis. The core of this pathway is composed of a kinase cascade wherein STK3/MST2 and STK4/MST1, in complex with its regulatory protein SAV1, phosphorylates and activates LATS1/2 in complex with its regulatory protein MOB1, which in turn phosphorylates and inactivates YAP1 oncoprotein and WWTR1/TAZ. Phosphorylation of YAP1 by LATS2 inhibits its translocation into the nucleus to regulate cellular genes important for cell proliferation, cell death, and cell migration. STK3/MST2 and STK4/MST1 are required to repress proliferation of mature hepatocytes, to prevent activation of facultative adult liver stem cells (oval cells), and to inhibit tumor formation. Phosphorylates 'Ser-14' of histone H2B (H2BS14ph) during apoptosis. Phosphorylates FOXO3 upon oxidative stress, which results in its nuclear translocation and cell death initiation. Phosphorylates MOBKL1A, MOBKL1B and RASSF2. Phosphorylates TNNI3 (cardiac Tn-I) and alters its binding affinity to TNNC1 (cardiac Tn-C) and TNNT2 (cardiac Tn-T). Phosphorylates FOXO1 on 'Ser-212' and regulates its activation and stimulates transcription of PMAIP1 in a FOXO1-dependent manner. Phosphorylates SIRT1 and inhibits SIRT1-mediated p53/TP53 deacetylation, thereby promoting p53/TP53 dependent transcription and apoptosis upon DNA damage. Acts as an inhibitor of PKB/AKT1. Phosphorylates AR on 'Ser-650' and suppresses its activity by intersecting with PKB/AKT1 signaling and antagonizing formation of AR-chromatin complexes. In Aotus nancymaae (Ma's night monkey), this protein is Serine/threonine-protein kinase 4 (STK4).